Here is a 279-residue protein sequence, read N- to C-terminus: NADPH-dependent 7-cyano-7-deazaguanine reductase (279 aa).

Position 86–88 (86–88 (VES)) interacts with substrate. 88-89 (SK) lines the NADPH pocket. Cys187 acts as the Thioimide intermediate in catalysis. The Proton donor role is filled by Asp194. Residue 226–227 (HE) participates in substrate binding. 255 to 256 (RG) serves as a coordination point for NADPH.

The protein belongs to the GTP cyclohydrolase I family. QueF type 2 subfamily. Homodimer.

Its subcellular location is the cytoplasm. It catalyses the reaction 7-aminomethyl-7-carbaguanine + 2 NADP(+) = 7-cyano-7-deazaguanine + 2 NADPH + 3 H(+). It functions in the pathway tRNA modification; tRNA-queuosine biosynthesis. In terms of biological role, catalyzes the NADPH-dependent reduction of 7-cyano-7-deazaguanine (preQ0) to 7-aminomethyl-7-deazaguanine (preQ1). The chain is NADPH-dependent 7-cyano-7-deazaguanine reductase from Actinobacillus succinogenes (strain ATCC 55618 / DSM 22257 / CCUG 43843 / 130Z).